Consider the following 287-residue polypeptide: Elongation factor Ts (287 aa).

The interval 80-83 (TDFL) is involved in Mg(2+) ion dislocation from EF-Tu.

Belongs to the EF-Ts family.

It localises to the cytoplasm. Functionally, associates with the EF-Tu.GDP complex and induces the exchange of GDP to GTP. It remains bound to the aminoacyl-tRNA.EF-Tu.GTP complex up to the GTP hydrolysis stage on the ribosome. This is Elongation factor Ts from Pseudomonas fluorescens (strain SBW25).